A 110-amino-acid chain; its full sequence is Quaternary ammonium compound-resistance protein QacE (110 aa).

4 helical membrane passes run 1–21, 30–50, 58–78, and 85–105; these read MKGWLFLVIAIVGEVIATSAL, LAPSAVVIIGYGIAFYFLSLV, VAYAVWSGLGVVIITAIAWLL, and AWGFVGMGLIVSGVVVLNLLS.

This sequence belongs to the drug/metabolite transporter (DMT) superfamily. Small multidrug resistance (SMR) (TC 2.A.7.1) family.

The protein localises to the cell membrane. Multidrug exporter. Is implicated for the resistance to bacteriocidal quaternary ammonium compounds. The sequence is that of Quaternary ammonium compound-resistance protein QacE (qacE) from Escherichia coli.